The following is a 663-amino-acid chain: Leishmanolysin-like peptidase (663 aa).

His246 lines the Zn(2+) pocket. Glu247 is an active-site residue. His250 and His353 together coordinate Zn(2+).

It belongs to the peptidase M8 family. Requires Zn(2+) as cofactor.

It is found in the cytoplasm. In terms of biological role, metalloprotease. The polypeptide is Leishmanolysin-like peptidase (Caenorhabditis briggsae).